The chain runs to 423 residues: GTPase ERA-like, chloroplastic (423 aa).

A chloroplast-targeting transit peptide spans 1–60 (MELGLALRLVAPPPRLPCRALQPPPMPCFSPCAARRSRIRSSRLERRVGVVVSGGSMASL). An Era-type G domain is found at 124–294 (RSGYVAVLGK…KEWILSKLPL (171 aa)). The G1 stretch occupies residues 132-139 (GKPNVGKS). 132 to 139 (GKPNVGKS) contacts GTP. The segment at 158 to 162 (QTTRH) is G2. The interval 179–182 (DTPG) is G3. Residues 179–183 (DTPGV) and 244–247 (NKKD) contribute to the GTP site. Positions 244-247 (NKKD) are G4. Residues 273–275 (ISA) form a G5 region. Residues 325–402 (YRQEIPYACQ…YLEIMVKVKE (78 aa)) form the KH type-2 domain.

The protein belongs to the TRAFAC class TrmE-Era-EngA-EngB-Septin-like GTPase superfamily. Era GTPase family.

It localises to the plastid. The protein localises to the chloroplast stroma. It is found in the chloroplast nucleoid. Functionally, nuclear genome-encoded probable GTPase involved in ribosome biogenesis in chloroplasts. Plays a role in 16S rRNA maturation in plastids and may contribute to the assembly of the small (30S) ribosomal subunit. The polypeptide is GTPase ERA-like, chloroplastic (Oryza sativa subsp. japonica (Rice)).